The chain runs to 315 residues: MIASFYAFLDYLKNMKAASPHTLRNYSIDLSSLKCFLEKKGELTPTPPLSLQEDSRSSSQLSFSLFTKENIRLYLLEQIQTTHSKRTVRRRLSAIKSFAKFCVKNQWIPENPAEMIRGPRLPKELPSPLTYEQVLALMSAPDLDKVTGFRDRCLLELFYSSGLRISEITALNRSDIDFQSNLLRICGKGKKERIVPMTKVAVQWLQAYLDHPDRAAVEQDHQACFLNRFGKRLSTRSIDRKFQQYLLKTGLSGTITPHTIRHTIATHWLERGMDLKTIQLLLGHTSLETTTIYTHVSMKLKKQIHDEAHPHNLED.

The region spanning 1–103 is the Core-binding (CB) domain; the sequence is MIASFYAFLD…AIKSFAKFCV (103 aa). Residues 124-306 form the Tyr recombinase domain; that stretch reads ELPSPLTYEQ…SMKLKKQIHD (183 aa). Active-site residues include Arg164, Lys188, His258, Arg261, and His284. Tyr293 acts as the O-(3'-phospho-DNA)-tyrosine intermediate in catalysis.

Belongs to the 'phage' integrase family. XerC subfamily. As to quaternary structure, forms a cyclic heterotetrameric complex composed of two molecules of XerC and two molecules of XerD.

The protein localises to the cytoplasm. Site-specific tyrosine recombinase, which acts by catalyzing the cutting and rejoining of the recombining DNA molecules. The XerC-XerD complex is essential to convert dimers of the bacterial chromosome into monomers to permit their segregation at cell division. It also contributes to the segregational stability of plasmids. The sequence is that of Tyrosine recombinase XerC from Chlamydia muridarum (strain MoPn / Nigg).